The chain runs to 72 residues: UPF0337 protein bsl2407 (72 aa).

A disordered region spans residues 1–55 (MGSTTDKIKGNANEAIGKAKQGIGEATGSDRLKGEGVVQEVKGKGQQAMGDAKDA). Low complexity predominate over residues 35–47 (EGVVQEVKGKGQQ).

The protein belongs to the UPF0337 (CsbD) family.

The polypeptide is UPF0337 protein bsl2407 (Bradyrhizobium diazoefficiens (strain JCM 10833 / BCRC 13528 / IAM 13628 / NBRC 14792 / USDA 110)).